A 172-amino-acid chain; its full sequence is MKHTLSVLVEDEAGVLTRIAGLFARRGFNIESLAVGSAEQGDVSRITMVVPGDENTIEQLTKQLYKLVNVIKVQDITETPCVERELMLVKVSANAPNRAEVIELAQVFRARIVDISEDTVTIEVVGDPGKMVAILQMLAKFGIKEVARTGKIALVRESGVNTEYLKSLESKF.

The 75-residue stretch at 4-78 (TLSVLVEDEA…NVIKVQDITE (75 aa)) folds into the ACT domain.

Belongs to the acetolactate synthase small subunit family. As to quaternary structure, dimer of large and small chains.

It carries out the reaction 2 pyruvate + H(+) = (2S)-2-acetolactate + CO2. The protein operates within amino-acid biosynthesis; L-isoleucine biosynthesis; L-isoleucine from 2-oxobutanoate: step 1/4. It functions in the pathway amino-acid biosynthesis; L-valine biosynthesis; L-valine from pyruvate: step 1/4. This is Acetolactate synthase small subunit (ilvH) from Synechocystis sp. (strain ATCC 27184 / PCC 6803 / Kazusa).